The following is a 72-amino-acid chain: uncharacterized protein (72 aa).

Its subcellular location is the plastid. The protein localises to the chloroplast. This is an uncharacterized protein from Oenothera berteroana (Bertero's evening primrose).